Consider the following 603-residue polypeptide: MSSNAQVRRRAVQAARGESPFDLLLIDAQIVDMATGEIRPADVGIVGEMIASVHPRGSREDAHEVRSLAGGYLSPGLMDTHVHLESSHLPPERYAEIVLTQGTTAVFWDPHELANVLGVAGVRYAVDASRHLPLQVMVAAPSSVPSTPGLEMSGADFAGAEMETMLGWPEVRGVAEVMDMHGVLHGSERMQEIVQAGLNSGKLIEGHARGLSGADLQAYLAAGVTSDHELTSADDALEKLRAGLTIEIRGSHPYLLPDIVAALKTLPHLSSQITVCTDDVPPDILLEKGGIIALLNLLIEHGLPAVDALRFATLNAAIRLQRHDLGLIAAGRRADLVVFDSLEKLVAREVYIGGKLLARAGNLLTPIAPAAGVTPPRDTLQIAPLRADDFILRVQGIRHGIARLRHIRGARFTQWGEVEVQVRDGIVQLPAGFSLIWVKHRHGRHQATPQIALLEGWGELRGAIATSYSHDSHNLVVLGRDANDMALAANQLIASGGGMALAQQGEILAHVAMPIAGMLSDLPAAELARQFRELRDLSSQVADWEPPYRVFKAIEGTCLACNAGPHLTDLGLTDGGSRQIVDPLIACREIPEPTDHNNNPQGA.

This sequence belongs to the metallo-dependent hydrolases superfamily. Adenine deaminase family. Homodimer. It depends on Mn(2+) as a cofactor.

It catalyses the reaction adenine + H2O + H(+) = hypoxanthine + NH4(+). The protein is Adenine deaminase of Klebsiella pneumoniae subsp. pneumoniae (strain ATCC 700721 / MGH 78578).